The sequence spans 340 residues: CMP-N-acetylneuraminate-beta-galactosamide-alpha-2,3-sialyltransferase 1 (340 aa).

Over 1–13 the chain is Cytoplasmic; the sequence is MVTLRKRTLKVLT. Residues 14–34 form a helical; Signal-anchor for type II membrane protein membrane-spanning segment; the sequence is FLVLFIFLTSFFLNYSHTMVA. At 35–340 the chain is on the lumenal side; it reads TTWFPKQMVL…INKIRIFKGR (306 aa). 3 cysteine pairs are disulfide-bonded: Cys59–Cys64, Cys61–Cys139, and Cys142–Cys281. A glycan (N-linked (GlcNAc...) asparagine) is linked at Asn79. Gln105 contributes to the substrate binding site. Asn114 carries N-linked (GlcNAc...) asparagine glycosylation. Substrate is bound by residues Asn147 and Asn170. An N-linked (GlcNAc...) asparagine glycan is attached at Asn201. 6 residues coordinate substrate: Tyr230, Tyr266, Gly270, Gly290, His299, and His316. N-linked (GlcNAc...) asparagine glycosylation is present at Asn323.

Belongs to the glycosyltransferase 29 family. In terms of processing, the soluble form derives from the membrane form by proteolytic processing.

It is found in the golgi apparatus. The protein resides in the golgi stack membrane. It localises to the trans-Golgi network membrane. The protein localises to the secreted. The catalysed reaction is a beta-D-galactosyl-(1-&gt;3)-N-acetyl-alpha-D-galactosaminyl derivative + CMP-N-acetyl-beta-neuraminate = an N-acetyl-alpha-neuraminyl-(2-&gt;3)-beta-D-galactosyl-(1-&gt;3)-N-acetyl-alpha-D-galactosaminyl derivative + CMP + H(+). It catalyses the reaction a ganglioside GM1 + CMP-N-acetyl-beta-neuraminate = a ganglioside GD1a + CMP + H(+). The enzyme catalyses a ganglioside GM1 (d18:1(4E)) + CMP-N-acetyl-beta-neuraminate = a ganglioside GD1a (d18:1(4E)) + CMP + H(+). It carries out the reaction ganglioside GM1 (d18:1(4E)/18:0) + CMP-N-acetyl-beta-neuraminate = ganglioside GD1a (18:1(4E)/18:0) + CMP + H(+). The catalysed reaction is a ganglioside GA1 + CMP-N-acetyl-beta-neuraminate = a ganglioside GM1b + CMP + H(+). It catalyses the reaction a ganglioside GA1 (d18:1(4E)) + CMP-N-acetyl-beta-neuraminate = a ganglioside GM1b (d18:1(4E)) + CMP + H(+). The enzyme catalyses a ganglioside GD1b + CMP-N-acetyl-beta-neuraminate = a ganglioside GT1b + CMP + H(+). It carries out the reaction a 3-O-[beta-D-galactosyl-(1-&gt;3)-N-acetyl-alpha-D-galactosaminyl]-L-threonyl-[protein] + CMP-N-acetyl-beta-neuraminate = a 3-O-[N-acetyl-alpha-neuraminyl-(2-&gt;3)-beta-D-galactosyl-(1-&gt;3)-N-acetyl-alpha-D-galactosaminyl]-L-threonyl-[protein] + CMP + H(+). The catalysed reaction is a 3-O-[beta-D-galactosyl-(1-&gt;3)-N-acetyl-alpha-D-galactosaminyl]-L-seryl-[protein] + CMP-N-acetyl-beta-neuraminate = 3-O-[N-acetyl-alpha-neuraminyl-(2-&gt;3)-beta-D-galactosyl-(1-&gt;3)-N-acetyl-alpha-D-galactosaminyl]-L-seryl-[protein] + CMP + H(+). Its pathway is protein modification; protein glycosylation. It functions in the pathway glycolipid biosynthesis. In terms of biological role, a beta-galactoside alpha2-&gt;3 sialyltransferase involved in terminal sialylation of glycoproteins and glycolipids. Catalyzes the transfer of sialic acid (N-acetyl-neuraminic acid; Neu5Ac) from the nucleotide sugar donor CMP-Neu5Ac onto acceptor Galbeta-(1-&gt;3)-GalNAc-terminated glycoconjugates through an alpha2-3 linkage. Adds sialic acid to the core 1 O-glycan, Galbeta-(1-&gt;3)-GalNAc-O-Ser/Thr, which is a major structure of mucin-type O-glycans. As part of a homeostatic mechanism that regulates CD8-positive T cell numbers, sialylates core 1 O-glycans of T cell glycoproteins, SPN/CD43 and PTPRC/CD45. Prevents premature apoptosis of thymic CD8-positive T cells prior to peripheral emigration, whereas in the secondary lymphoid organs controls the survival of CD8-positive memory T cells generated following a successful immune response. Transfers sialic acid to asialofetuin, presumably onto Galbeta-(1-&gt;3)-GalNAc-O-Ser. Sialylates GM1a, GA1 and GD1b gangliosides to form GD1a, GM1b and GT1b, respectively. This is CMP-N-acetylneuraminate-beta-galactosamide-alpha-2,3-sialyltransferase 1 (ST3GAL1) from Pan troglodytes (Chimpanzee).